The chain runs to 367 residues: tRNA uridine(34) hydroxylase (367 aa).

One can recognise a Rhodanese domain in the interval 159-249; sequence EDKNSIVVDV…GIISYAHEIS (91 aa). C213 functions as the Cysteine persulfide intermediate in the catalytic mechanism.

Belongs to the TrhO family.

The catalysed reaction is uridine(34) in tRNA + AH2 + O2 = 5-hydroxyuridine(34) in tRNA + A + H2O. Its function is as follows. Catalyzes oxygen-dependent 5-hydroxyuridine (ho5U) modification at position 34 in tRNAs. This is tRNA uridine(34) hydroxylase from Leptospira borgpetersenii serovar Hardjo-bovis (strain L550).